The following is a 245-amino-acid chain: Ribonuclease 3 (245 aa).

The RNase III domain occupies 19-148; the sequence is FRAFQQKLGI…FIGALYLDQG (130 aa). Mg(2+) is bound at residue glutamate 61. The active site involves aspartate 65. Residues aspartate 134 and glutamate 137 each coordinate Mg(2+). Glutamate 137 is an active-site residue. One can recognise a DRBM domain in the interval 174–243; it reads DYKSQLQELI…AAEALRKLKE (70 aa).

Belongs to the ribonuclease III family. Homodimer. Mg(2+) serves as cofactor.

Its subcellular location is the cytoplasm. It catalyses the reaction Endonucleolytic cleavage to 5'-phosphomonoester.. In terms of biological role, digests double-stranded RNA. Involved in the processing of primary rRNA transcript to yield the immediate precursors to the large and small rRNAs (23S and 16S). Processes some mRNAs, and tRNAs when they are encoded in the rRNA operon. Processes pre-crRNA and tracrRNA of type II CRISPR loci if present in the organism. The polypeptide is Ribonuclease 3 (Bacillus cytotoxicus (strain DSM 22905 / CIP 110041 / 391-98 / NVH 391-98)).